We begin with the raw amino-acid sequence, 176 residues long: Large ribosomal subunit protein uL16 (176 aa).

It belongs to the universal ribosomal protein uL16 family.

The polypeptide is Large ribosomal subunit protein uL16 (Halobacterium salinarum (strain ATCC 29341 / DSM 671 / R1)).